The following is a 517-amino-acid chain: Recombining binding protein suppressor of hairless-like protein (517 aa).

Positions 26 to 37 (EMQLQSEADRRS) are enriched in basic and acidic residues. Residues 26–48 (EMQLQSEADRRSLPGTWTRSSPE) form a disordered region. 3 DNA-binding regions span residues 78–88 (QKSYGNEKRFF), 193–198 (SKPSQK), and 220–225 (RLRSQT). Residues 387–512 (LISTLELSGG…HQEFTRTNFH (126 aa)) enclose the IPT/TIG domain.

It belongs to the Su(H) family. As to quaternary structure, interacts weakly with EBNA2. Does not interact with any Notch proteins.

Its subcellular location is the nucleus. Putative transcription factor, which cooperates with EBNA2 to activate transcription. The sequence is that of Recombining binding protein suppressor of hairless-like protein (RBPJL) from Homo sapiens (Human).